The following is a 310-amino-acid chain: Ribosomal RNA small subunit methyltransferase H (310 aa).

S-adenosyl-L-methionine is bound by residues Gly-47–His-49, Asp-66, Phe-93, Asp-108, and Gln-115.

The protein belongs to the methyltransferase superfamily. RsmH family.

It localises to the cytoplasm. It carries out the reaction cytidine(1402) in 16S rRNA + S-adenosyl-L-methionine = N(4)-methylcytidine(1402) in 16S rRNA + S-adenosyl-L-homocysteine + H(+). Functionally, specifically methylates the N4 position of cytidine in position 1402 (C1402) of 16S rRNA. The chain is Ribosomal RNA small subunit methyltransferase H from Prochlorococcus marinus (strain MIT 9303).